The primary structure comprises 332 residues: Small ribosomal subunit protein uS2 (332 aa).

The protein belongs to the universal ribosomal protein uS2 family.

The polypeptide is Small ribosomal subunit protein uS2 (Nitrobacter hamburgensis (strain DSM 10229 / NCIMB 13809 / X14)).